A 276-amino-acid polypeptide reads, in one-letter code: Dermonecrotic toxin LlSicTox-alphaIV3 (276 aa).

The active site involves His-5. Mg(2+)-binding residues include Glu-25 and Asp-27. The active-site Nucleophile is His-41. 2 cysteine pairs are disulfide-bonded: Cys-45–Cys-51 and Cys-47–Cys-192. Asp-85 contributes to the Mg(2+) binding site.

Belongs to the arthropod phospholipase D family. Class II subfamily. It depends on Mg(2+) as a cofactor. Expressed by the venom gland.

The protein localises to the secreted. It carries out the reaction an N-(acyl)-sphingosylphosphocholine = an N-(acyl)-sphingosyl-1,3-cyclic phosphate + choline. It catalyses the reaction an N-(acyl)-sphingosylphosphoethanolamine = an N-(acyl)-sphingosyl-1,3-cyclic phosphate + ethanolamine. The catalysed reaction is a 1-acyl-sn-glycero-3-phosphocholine = a 1-acyl-sn-glycero-2,3-cyclic phosphate + choline. The enzyme catalyses a 1-acyl-sn-glycero-3-phosphoethanolamine = a 1-acyl-sn-glycero-2,3-cyclic phosphate + ethanolamine. Functionally, dermonecrotic toxins cleave the phosphodiester linkage between the phosphate and headgroup of certain phospholipids (sphingolipid and lysolipid substrates), forming an alcohol (often choline) and a cyclic phosphate. This toxin acts on sphingomyelin (SM). It may also act on ceramide phosphoethanolamine (CPE), lysophosphatidylcholine (LPC) and lysophosphatidylethanolamine (LPE), but not on lysophosphatidylserine (LPS), and lysophosphatidylglycerol (LPG). It acts by transphosphatidylation, releasing exclusively cyclic phosphate products as second products. Induces dermonecrosis, hemolysis, increased vascular permeability, edema, inflammatory response, and platelet aggregation. The polypeptide is Dermonecrotic toxin LlSicTox-alphaIV3 (Loxosceles laeta (South American recluse spider)).